We begin with the raw amino-acid sequence, 145 residues long: D-aminoacyl-tRNA deacylase (145 aa).

The Gly-cisPro motif, important for rejection of L-amino acids motif lies at 137–138 (GP).

This sequence belongs to the DTD family. As to quaternary structure, homodimer.

It is found in the cytoplasm. It carries out the reaction glycyl-tRNA(Ala) + H2O = tRNA(Ala) + glycine + H(+). It catalyses the reaction a D-aminoacyl-tRNA + H2O = a tRNA + a D-alpha-amino acid + H(+). Its function is as follows. An aminoacyl-tRNA editing enzyme that deacylates mischarged D-aminoacyl-tRNAs. Also deacylates mischarged glycyl-tRNA(Ala), protecting cells against glycine mischarging by AlaRS. Acts via tRNA-based rather than protein-based catalysis; rejects L-amino acids rather than detecting D-amino acids in the active site. By recycling D-aminoacyl-tRNA to D-amino acids and free tRNA molecules, this enzyme counteracts the toxicity associated with the formation of D-aminoacyl-tRNA entities in vivo and helps enforce protein L-homochirality. This chain is D-aminoacyl-tRNA deacylase, found in Saccharophagus degradans (strain 2-40 / ATCC 43961 / DSM 17024).